The following is a 251-amino-acid chain: Cell division protein ZapD (251 aa).

It belongs to the ZapD family. Interacts with FtsZ.

The protein localises to the cytoplasm. Its function is as follows. Cell division factor that enhances FtsZ-ring assembly. Directly interacts with FtsZ and promotes bundling of FtsZ protofilaments, with a reduction in FtsZ GTPase activity. The sequence is that of Cell division protein ZapD from Burkholderia mallei (strain NCTC 10247).